The following is a 170-amino-acid chain: Thialysine N-epsilon-acetyltransferase (170 aa).

The N-acetyltransferase domain maps to 4–166; sequence TRIREARESD…FRFEGEAMRE (163 aa). Residue 27 to 28 participates in substrate binding; the sequence is FE. The residue at position 29 (Lys29) is an N6-acetyllysine. Glu92 provides a ligand contact to substrate. Residues 94–96, 102–107, 133–135, and Tyr140 contribute to the acetyl-CoA site; these read IYV, GQGIGT, and NKK. Tyr140 serves as the catalytic Proton donor. Position 152 (Glu152) interacts with substrate.

It belongs to the acetyltransferase family. In terms of assembly, homodimer.

Its subcellular location is the cytoplasm. The catalysed reaction is S-(2-aminoethyl)-L-cysteine + acetyl-CoA = S-(2-acetamidoethyl)-L-cysteine + CoA + H(+). It carries out the reaction an alkane-alpha,omega-diamine + acetyl-CoA = an N-acetylalkane-alpha,omega-diamine + CoA + H(+). Functionally, catalyzes the N-acetylation of the amino acid thialysine (S-(2-aminoethyl)-L-cysteine), a L-lysine analog with the 4-methylene group substituted with a sulfur. May also catalyze acetylation of polyamines, such as norspermidine, spermidine or spermine. However, ability to acetylate polyamines is weak, suggesting that it does not act as a diamine acetyltransferase in vivo. This Mus musculus (Mouse) protein is Thialysine N-epsilon-acetyltransferase.